Reading from the N-terminus, the 169-residue chain is Putative lipocalin R877 (169 aa).

The first 18 residues, 1 to 18, serve as a signal peptide directing secretion; the sequence is MWIIILIVIIVIITIIFS.

The protein belongs to the calycin superfamily. Lipocalin family.

It is found in the secreted. The protein localises to the virion. Functionally, could play a role in the transport of a small ligand. This Acanthamoeba polyphaga mimivirus (APMV) protein is Putative lipocalin R877.